Consider the following 314-residue polypeptide: tRNA pseudouridine synthase B (314 aa).

A substrate-binding site is contributed by histidine 43. Aspartate 48 (nucleophile) is an active-site residue. Residues tyrosine 76, tyrosine 179, and leucine 200 each contribute to the substrate site.

Belongs to the pseudouridine synthase TruB family. Type 1 subfamily.

It carries out the reaction uridine(55) in tRNA = pseudouridine(55) in tRNA. In terms of biological role, responsible for synthesis of pseudouridine from uracil-55 in the psi GC loop of transfer RNAs. The chain is tRNA pseudouridine synthase B from Shigella boydii serotype 4 (strain Sb227).